The chain runs to 98 residues: NADH-ubiquinone oxidoreductase chain 4L (98 aa).

3 helical membrane passes run 1–21 (MPSI…GMLI), 29–49 (SLLC…LTAL), and 61–81 (IVLL…LVMV).

This sequence belongs to the complex I subunit 4L family. Core subunit of respiratory chain NADH dehydrogenase (Complex I) which is composed of 45 different subunits.

It is found in the mitochondrion inner membrane. It catalyses the reaction a ubiquinone + NADH + 5 H(+)(in) = a ubiquinol + NAD(+) + 4 H(+)(out). Functionally, core subunit of the mitochondrial membrane respiratory chain NADH dehydrogenase (Complex I) which catalyzes electron transfer from NADH through the respiratory chain, using ubiquinone as an electron acceptor. Part of the enzyme membrane arm which is embedded in the lipid bilayer and involved in proton translocation. The sequence is that of NADH-ubiquinone oxidoreductase chain 4L (MT-ND4L) from Lepus europaeus (European hare).